Reading from the N-terminus, the 948-residue chain is Coiled-coil domain-containing protein 66 (948 aa).

A phosphothreonine mark is found at threonine 115 and threonine 121. Residue serine 369 is modified to Phosphoserine. The tract at residues 458 to 499 (DRRRQKQLEHQKAITAQVEEKRRKKQLEEEQRKKEEQEEELR) is disordered. A coiled-coil region spans residues 467-558 (HQKAITAQVE…EQRIRELAQK (92 aa)). Residues 570-948 (GVDTIQMEYN…NQEESFGSSF (379 aa)) are mediates localization to cilia, centrosomes and spindle microtubules and the interaction with PCM1, CEP290, CEP104 and CSPP1. Serine 606 bears the Phosphoserine mark. Disordered stretches follow at residues 690-713 (QTKH…KRYI) and 788-808 (SFSK…RTQQ).

In terms of assembly, homodimer; disulfide-linked. Interacts with CEP290. Interacts with PCM1. Interacts with ARMC9, TOGARAM1, CSPP1 and CEP104. Interacts with CDK5RAP2, CEP152, CEP192, TBG1 and PRC1. Widely expressed (at protein level). Expressed in retina, mainly in photoreceptors but also in outer plexiform and ganglion cell layers (at protein level).

The protein localises to the cytoplasm. Its subcellular location is the cytoskeleton. The protein resides in the microtubule organizing center. It localises to the centrosome. It is found in the centriolar satellite. The protein localises to the cell projection. Its subcellular location is the cilium. The protein resides in the cilium basal body. It localises to the cilium axoneme. It is found in the photoreceptor inner segment. The protein localises to the photoreceptor outer segment. Its subcellular location is the spindle. The protein resides in the midbody. Its function is as follows. Microtubule-binding protein required for ciliogenesis. May function in ciliogenesis by mediating the transport of proteins like BBS4 to the cilium, but also through the organization of the centriolar satellites. Required for the assembly of signaling-competent cilia with proper structure and length. Mediates this function in part by regulating transition zone assembly and basal body recruitment of the IFT-B complex. Cooperates with the ciliopathy proteins CSPP1 and CEP104 during cilium length regulation. Plays two important roles during cell division. First, is required for mitotic progression via regulation of spindle assembly, organization and orientation, levels of spindle microtubules (MTs), kinetochore-fiber integrity, and chromosome alignment. Second, functions during cytokinesis in part by regulating assembly and organization of central spindle and midbody MTs. Plays a role in retina morphogenesis and/or homeostasis. This chain is Coiled-coil domain-containing protein 66, found in Homo sapiens (Human).